Reading from the N-terminus, the 273-residue chain is Shikimate dehydrogenase (NADP(+)) (273 aa).

Residues 14–16 (SKS) and T61 contribute to the shikimate site. The active-site Proton acceptor is the K65. E77 serves as a coordination point for NADP(+). Residues N86 and D102 each contribute to the shikimate site. Residues 126-130 (GAGGA), 150-155 (NRTLSK), and M214 each bind NADP(+). A shikimate-binding site is contributed by Y216. An NADP(+)-binding site is contributed by G238.

The protein belongs to the shikimate dehydrogenase family. As to quaternary structure, homodimer.

It catalyses the reaction shikimate + NADP(+) = 3-dehydroshikimate + NADPH + H(+). The protein operates within metabolic intermediate biosynthesis; chorismate biosynthesis; chorismate from D-erythrose 4-phosphate and phosphoenolpyruvate: step 4/7. In terms of biological role, involved in the biosynthesis of the chorismate, which leads to the biosynthesis of aromatic amino acids. Catalyzes the reversible NADPH linked reduction of 3-dehydroshikimate (DHSA) to yield shikimate (SA). In Photobacterium profundum (strain SS9), this protein is Shikimate dehydrogenase (NADP(+)).